The following is a 1342-amino-acid chain: DNA-directed RNA polymerase subunit beta (1342 aa).

N6-acetyllysine is present on residues K1022 and K1200.

It belongs to the RNA polymerase beta chain family. As to quaternary structure, the RNAP catalytic core consists of 2 alpha, 1 beta, 1 beta' and 1 omega subunit. When a sigma factor is associated with the core the holoenzyme is formed, which can initiate transcription.

The enzyme catalyses RNA(n) + a ribonucleoside 5'-triphosphate = RNA(n+1) + diphosphate. In terms of biological role, DNA-dependent RNA polymerase catalyzes the transcription of DNA into RNA using the four ribonucleoside triphosphates as substrates. In Shigella flexneri serotype 5b (strain 8401), this protein is DNA-directed RNA polymerase subunit beta.